A 211-amino-acid chain; its full sequence is MRASRKGDALAQLLYNEGIRSQAVLNAIAGTPRESFLPDALKHKAYQNTALPIGQGQTISQPYIVAKMTELLLDSPNKPEKVLEIGTGSGYQTAILAQLFAKVFSVERIKTLQFQAKRRMNQLDLHNIAMKHGDGWKGWASKGPYDAIIVTAAAASLPQDLCDQLKEGGRLIIPVGNEQQSLLCIDRIEGELKTSTIESVRFVPLVAGELM.

The active site involves Ser-60.

Belongs to the methyltransferase superfamily. L-isoaspartyl/D-aspartyl protein methyltransferase family.

The protein resides in the cytoplasm. It catalyses the reaction [protein]-L-isoaspartate + S-adenosyl-L-methionine = [protein]-L-isoaspartate alpha-methyl ester + S-adenosyl-L-homocysteine. Catalyzes the methyl esterification of L-isoaspartyl residues in peptides and proteins that result from spontaneous decomposition of normal L-aspartyl and L-asparaginyl residues. It plays a role in the repair and/or degradation of damaged proteins. The polypeptide is Protein-L-isoaspartate O-methyltransferase (Alteromonas mediterranea (strain DSM 17117 / CIP 110805 / LMG 28347 / Deep ecotype)).